Here is a 93-residue protein sequence, read N- to C-terminus: MATAKPTFEEQLAQLQQIVNHLEQGNVPLEEALQQFQEGIKLSKELQTKLTNAEKTLGHLIDDNGDEKVYEKQTDDPSNNGGGNRGFGSADEQ.

A compositionally biased stretch (basic and acidic residues) spans 61-75 (IDDNGDEKVYEKQTD). Residues 61–93 (IDDNGDEKVYEKQTDDPSNNGGGNRGFGSADEQ) are disordered.

Belongs to the XseB family. As to quaternary structure, heterooligomer composed of large and small subunits.

It is found in the cytoplasm. The catalysed reaction is Exonucleolytic cleavage in either 5'- to 3'- or 3'- to 5'-direction to yield nucleoside 5'-phosphates.. Its function is as follows. Bidirectionally degrades single-stranded DNA into large acid-insoluble oligonucleotides, which are then degraded further into small acid-soluble oligonucleotides. This Limosilactobacillus reuteri (strain DSM 20016) (Lactobacillus reuteri) protein is Exodeoxyribonuclease 7 small subunit.